Here is a 432-residue protein sequence, read N- to C-terminus: MAVIESVYARQILDSRGNPTVEVVLDTDDGAQGLGLVPSGASTGEAEAWERRDGDKSVYQGKGVLNAVKAVNEEIAPKVIGMDASDQRALDETMIELDGTPNKGRLGANAILGVSLAALYASAESADQPLYRYIGGTNGHILPVPNMNIMNGGAHADFATDIQEYMISPYGFNTYSEALQAGVEVYHTLKNVLKKQGLNTGLGDEGGFAPKMKSNKDSLNYIMDAISAAGYEPGKQIGISLDVASSEFYNKETGKYHFEGDDREAGYMLDFYENLINEYPIVSIEDPFQEEGWDDWAAITAKLGDRLQFVGDDLLVTNPARLAKGIKLGAANSLLVKLNQIGTVTETLDAIELATKNGFTSMVSHRSGETPDTTISDLAVAKNTGQIKTGAPARGERIAKYNRLLEIEEELGSTAQYAGYSAFKACKKYIAE.

Glutamine 163 contributes to the (2R)-2-phosphoglycerate binding site. Glutamate 205 functions as the Proton donor in the catalytic mechanism. Mg(2+) is bound by residues aspartate 242, glutamate 285, and aspartate 312. (2R)-2-phosphoglycerate contacts are provided by lysine 337, arginine 366, serine 367, and lysine 388. Lysine 337 (proton acceptor) is an active-site residue.

It belongs to the enolase family. Requires Mg(2+) as cofactor.

It is found in the cytoplasm. The protein localises to the secreted. The protein resides in the cell surface. It carries out the reaction (2R)-2-phosphoglycerate = phosphoenolpyruvate + H2O. It functions in the pathway carbohydrate degradation; glycolysis; pyruvate from D-glyceraldehyde 3-phosphate: step 4/5. In terms of biological role, catalyzes the reversible conversion of 2-phosphoglycerate (2-PG) into phosphoenolpyruvate (PEP). It is essential for the degradation of carbohydrates via glycolysis. The protein is Enolase of Bifidobacterium adolescentis (strain ATCC 15703 / DSM 20083 / NCTC 11814 / E194a).